An 891-amino-acid chain; its full sequence is uncharacterized protein (891 aa).

An N-terminal signal peptide occupies residues 1 to 20 (MKILKSLVLLVLFMAMPAKA). The next 6 helical transmembrane spans lie at 525–545 (VTIF…VEVI), 568–588 (TYFF…VVGA), 614–634 (LLFI…IITI), 652–672 (VIAF…IILM), 685–705 (ISTL…FLLI), and 776–796 (FLVL…SYSL).

The protein belongs to the TrbL/VirB6 family.

Its subcellular location is the cell membrane. This is an uncharacterized protein from Rickettsia conorii (strain ATCC VR-613 / Malish 7).